We begin with the raw amino-acid sequence, 91 residues long: Small ribosomal subunit protein uS15 (91 aa).

The protein belongs to the universal ribosomal protein uS15 family. Part of the 30S ribosomal subunit. Forms a bridge to the 50S subunit in the 70S ribosome, contacting the 23S rRNA.

Functionally, one of the primary rRNA binding proteins, it binds directly to 16S rRNA where it helps nucleate assembly of the platform of the 30S subunit by binding and bridging several RNA helices of the 16S rRNA. Forms an intersubunit bridge (bridge B4) with the 23S rRNA of the 50S subunit in the ribosome. The polypeptide is Small ribosomal subunit protein uS15 (Deinococcus radiodurans (strain ATCC 13939 / DSM 20539 / JCM 16871 / CCUG 27074 / LMG 4051 / NBRC 15346 / NCIMB 9279 / VKM B-1422 / R1)).